The following is a 383-amino-acid chain: Delta(12) fatty acid desaturase FAD2 (383 aa).

Residues 1-29 (MGAGGRMQDPTNGGNKTEPEPIQRVPHEK) form a disordered region. Basic and acidic residues predominate over residues 17–29 (TEPEPIQRVPHEK). Transmembrane regions (helical) follow at residues 50-70 (VIRSFSYVFYDLTIASILYYI) and 85-105 (VAWPVYWAVQGCVLTGVWVIA). Residues 106 to 110 (HECGH) carry the Histidine box-1 motif. Residues 118-138 (WLDDTVGLVLHSFLLVPYFSW) traverse the membrane as a helical segment. A Histidine box-2 motif is present at residues 142-146 (HRRHH). A run of 3 helical transmembrane segments spans residues 180–200 (ILTLLVTLTLGWPLYLTFNVS), 226–246 (IFISDAGILAVVFVLFRLAMT), and 252–272 (VLTMYGGPLLVVNGFLVLITF). The Histidine box-3 motif lies at 316–320 (HVAHH).

Belongs to the fatty acid desaturase type 1 family. As to expression, expressed in leaves, flower buds and developing seeds.

It localises to the membrane. It functions in the pathway lipid metabolism; polyunsaturated fatty acid biosynthesis. Catalyzes the desaturation of oleic acid to linoleic acid. Introduces a double bond at position 12 of 16:1(9Z) and 18:1(9Z). The sequence is that of Delta(12) fatty acid desaturase FAD2 from Calendula officinalis (Pot marigold).